Here is a 343-residue protein sequence, read N- to C-terminus: Protein RecA (343 aa).

65–72 is a binding site for ATP; it reads GPESSGKT.

Belongs to the RecA family.

It localises to the cytoplasm. Can catalyze the hydrolysis of ATP in the presence of single-stranded DNA, the ATP-dependent uptake of single-stranded DNA by duplex DNA, and the ATP-dependent hybridization of homologous single-stranded DNAs. It interacts with LexA causing its activation and leading to its autocatalytic cleavage. This chain is Protein RecA, found in Xanthomonas campestris pv. campestris (strain 8004).